We begin with the raw amino-acid sequence, 178 residues long: Large ribosomal subunit protein uL6 (178 aa).

This sequence belongs to the universal ribosomal protein uL6 family. In terms of assembly, part of the 50S ribosomal subunit.

Its function is as follows. This protein binds to the 23S rRNA, and is important in its secondary structure. It is located near the subunit interface in the base of the L7/L12 stalk, and near the tRNA binding site of the peptidyltransferase center. This Geobacillus kaustophilus (strain HTA426) protein is Large ribosomal subunit protein uL6.